The chain runs to 491 residues: ENTVSHEVQRLTVTDLDAPNSPAWRATYRIVGGDNGDHFTITTDPESNQGILTTQKGLDFEAKTQHTLYVEVINEVPFVVKLPTSTATVVVLVEDVNEPPVFVPPSKVIEIQEGISTGEPICAYTARDPDKGSQKISYHILRDPAGWLAMDPDSGQVTAAGVLDREDEQFVRNNIYEVMVLATDDGSPPTTGTGTLLLTLMDINDHGPVPEPRQITICNQSPVPQVLNITDKDLSPHTAPFQAQLTHDSDVYWTAEVNEKGDAVALSLKKFLKQGEYDVHLSLSDHGNKEQLTVIRATVCDCHGNMVTCRDPWTWGFLLPILGAALALLLLLLVLLFLVRKKRKIKEPLLLPEDDTRDNVFYYGEEGGGEEDQDYDITQLHRGLEARPEVVLRNDVAPSFIPTPMYRPRPANPDEIGNFIIENLKAANTDPTAPPYDSLLVFDYEGSGSDAASLSSLTSSTSDQDQDYNYLNEWGSRFKKLADMYGGGQDD.

3 consecutive Cadherin domains span residues 1 to 102 (ENTV…PPVF), 103 to 208 (VPPS…DHGP), and 209 to 314 (VPEP…DPWT). Topologically, residues 1-316 (ENTVSHEVQR…VTCRDPWTWG (316 aa)) are extracellular. N-linked (GlcNAc...) asparagine glycosylation is present at N228. A helical membrane pass occupies residues 317-339 (FLLPILGAALALLLLLLVLLFLV). Residues 340–491 (RKKRKIKEPL…ADMYGGGQDD (152 aa)) are Cytoplasmic-facing.

In terms of assembly, interacts with CDCP1 and CTNNB1.

It is found in the cell membrane. Functionally, cadherins are calcium-dependent cell adhesion proteins. They preferentially interact with themselves in a homophilic manner in connecting cells; cadherins may thus contribute to the sorting of heterogeneous cell types. This chain is Cadherin-3 (CDH3), found in Bos taurus (Bovine).